We begin with the raw amino-acid sequence, 456 residues long: Endoglucanase A (456 aa).

Residues 1–30 (MSRIRRFLATALAAATAGVGAIVTAIASAG) form the signal peptide. A catalytic region spans residues 31 to 322 (PAHAYDSPFY…RAYELAMNAA (292 aa)). The active site involves aspartate 113. 2 disulfide bridges follow: cysteine 114–cysteine 159 and cysteine 267–cysteine 302. The active-site Proton donor is the aspartate 151. Residues 255–280 (SRNGNGPLGSEWCDPPGRATGTWSTT) form a disordered region. Aspartate 300 (nucleophile) is an active-site residue. The segment at 321–358 (AAPPTYSPSPTPSTPSPSPSQSDPGSPSPSPSQPPAGR) is disordered. Residues 323 to 355 (PPTYSPSPTPSTPSPSPSQSDPGSPSPSPSQPP) are linker ('hinge') (Pro-Ser box). Pro residues predominate over residues 325–338 (TYSPSPTPSTPSPS). Residues 353-456 (QPPAGRACEA…LSSSITCSAS (104 aa)) form the CBM2 domain. The cysteines at positions 360 and 453 are disulfide-linked.

It belongs to the glycosyl hydrolase 6 (cellulase B) family.

The catalysed reaction is Endohydrolysis of (1-&gt;4)-beta-D-glucosidic linkages in cellulose, lichenin and cereal beta-D-glucans.. The protein is Endoglucanase A (celA) of Thermobispora bispora (Microbispora bispora).